We begin with the raw amino-acid sequence, 55 residues long: Protein CADMIUM TOLERANCE 1 (55 aa).

Residues 24–40 (GCLYACIFTALCCFCCY) traverse the membrane as a helical segment.

The protein belongs to the CYSTM1 family.

It is found in the cell membrane. The protein resides in the secreted. The protein localises to the cell wall. Confers resistance to heavy metal ions (e.g. cadmium (CdCl(2)) and copper (CuCl(2))) by chelating them at the plasma membrane of root cells, thus stopping their entry and reducing their accumulation. Binds to aluminium (Al). This Oryza sativa subsp. indica (Rice) protein is Protein CADMIUM TOLERANCE 1.